A 906-amino-acid polypeptide reads, in one-letter code: MLSILKKLFGTANDRTVKKLFSEITKINSLEPAIQKLSDEELKNKTVEFKEKLKNGATLDDIVYEAFAVVREAARRVCGMRHFDVQLIGGLILHRGMITEMRTGEGKTLVATLPAYLNALTGKGVHVVTVNDYLASRDSASMGKIYNFLGLSVGCIVAGMPDEAKRAAYNADITHATNNELGFDYLRDNMKYSLQERVLRPFNFAIIDEVDSILIDEARTPLVISGPVNDNSELYGKIDKIVRMLNTSDFEKDEKLKTINLTETGITHIESLLSKEHLIKPDTGLYDFENLTLVHYVNQALRAHNMFTVDVDYLVREGKVMIIDEFTGRVMEGRRYSEGLHQALEAKENVKIQNENQTLASITFQNYFRNYPKLSGMTGTAMTEAPELKDIYNLDVVAVPTHNKVTRLDLDDEIYGSKKEKYDAILKLIKDCYDRGQPILVGTISIEKSEELSSVLNKEKIPHKVLNAKFHEQEAFIIAQAGRFKAVTIATNMAGRGTDIMLGGNPEMLIEQLDEDHNYETKAAEIKAQISEEKKQVIEAGGLFVIGTERHESRRIDNQLRGRSGRQGDPGKTKFFLSLDDDLMRIFASDRISGVLRTLGLKDGEAIHHPMISRSLEKAQQKVEGHNYEMRKNLLRFDDVMNDQRKIIYEQRTEIIKSKDSHGFLNSTTEELAKKIVLTFMPVGSYREDWDIENLSVELHRVFSMKFDHNLVSKNDVTEEEITKIVIQTAHDIYKSKEEAYSSELMHNAVKYILLTTLDQVWKDHLYSLDHLRQGISLRAYAQKDPLSEYKREAFNLFEQMLNNLKELFIQTVYHFHIDLKHIQKEDVSLEHKKLQKNMRESREDPAFSKYNAGSSLETDLKPVVSRVDPKDRNPDDPTSWGRVSRNELCPCGSGKKYKYCHGANE.

ATP-binding positions include Gln-86, 104 to 108 (GEGKT), and Asp-499. The span at 834-847 (KLQKNMRESREDPA) shows a compositional bias: basic and acidic residues. Residues 834-887 (KLQKNMRESREDPAFSKYNAGSSLETDLKPVVSRVDPKDRNPDDPTSWGRVSRN) are disordered. Zn(2+)-binding residues include Cys-890, Cys-892, Cys-901, and His-902.

This sequence belongs to the SecA family. As to quaternary structure, monomer and homodimer. Part of the essential Sec protein translocation apparatus which comprises SecA, SecYEG and auxiliary proteins SecDF-YajC and YidC. Zn(2+) is required as a cofactor.

The protein resides in the cell inner membrane. The protein localises to the cytoplasm. The enzyme catalyses ATP + H2O + cellular proteinSide 1 = ADP + phosphate + cellular proteinSide 2.. Its function is as follows. Part of the Sec protein translocase complex. Interacts with the SecYEG preprotein conducting channel. Has a central role in coupling the hydrolysis of ATP to the transfer of proteins into and across the cell membrane, serving both as a receptor for the preprotein-SecB complex and as an ATP-driven molecular motor driving the stepwise translocation of polypeptide chains across the membrane. The polypeptide is Protein translocase subunit SecA (Rickettsia felis (strain ATCC VR-1525 / URRWXCal2) (Rickettsia azadi)).